The sequence spans 446 residues: StAR-related lipid transfer protein 3 (446 aa).

Topologically, residues 1–52 are cytoplasmic; sequence MSKRPGDLACDLERSLPALASLGTSLSHSQSLSSHFIPPPLEKRRAISDVRR. The 172-residue stretch at 47-218 folds into the MENTAL domain; sequence ISDVRRTFCL…YSPPESFAGS (172 aa). The helical transmembrane segment at 53–73 threads the bilayer; it reads TFCLFVTFDLLFISLLWIIEL. At 74 to 95 the chain is on the extracellular side; it reads NTNTGIRKNLEQEVIHYSFQSS. Residues 96–116 form a helical membrane-spanning segment; sequence FFDIFVLAFFRFSGLLLGYAV. Topologically, residues 117–121 are cytoplasmic; it reads LRLQH. A helical membrane pass occupies residues 122 to 142; sequence WWVIAVTTLVSSAFLIVKVIL. Residues 143–149 lie on the Extracellular side of the membrane; the sequence is SELLSKG. A helical membrane pass occupies residues 150-170; that stretch reads AFGYLLPIVSFVLAWLETWFL. The Cytoplasmic portion of the chain corresponds to 171–446; the sequence is DFKVLPQEAE…QRVGELGARA (276 aa). The FFAT motif lies at 207–213; that stretch reads QFYSPPE. Phosphoserine occurs at positions 210, 218, and 222. The START domain maps to 231–444; sequence SFSAQEREYI…LRQRVGELGA (214 aa).

This sequence belongs to the STARD3 family. As to quaternary structure, homodimer. Interacts (via the MENTAL domain) with STARD3NL. Interacts (via phosphorylated FFAT motif) with VAPA (via MSP domain). Interacts (via phosphorylated FFAT motif) with VAPB (via MSP domain). Interacts (via phosphorylated FFAT motif) with MOSPD2 (via MSP domain); this interaction allows enrichment of MOSPD2 around endosomes. Phosphorylation at Ser-210 is necessary and sufficient for the direct interaction of the phosphorylated FFAT motif with the MSP domain of MOSPD2, VAPA and VAPB and allows the tethering of two membranes that participates in the formation of ER-endosome contacts. Phosphorylation of the FFAT motif leads to conformation changes. Additional phosphorylations around the core FFAT motif (QFYSPPE) are not essential but strengthen the interaction with MOSPD2, VAPA and VAPB. Phosphorylation at Ser-210 of FFAT motif drives membrane tethering between the endoplasmic reticulum and late endosomes via interaction with VAPA and VAPB that in turn allows the efficient transport of sterol mediated by the START domain.

It localises to the late endosome membrane. The catalysed reaction is cholesterol(in) = cholesterol(out). Sterol-binding protein that mediates cholesterol transport from the endoplasmic reticulum to endosomes. The sterol transport mechanism is triggered by phosphorylation of FFAT motif that leads to membrane tethering between the endoplasmic reticulum and late endosomes via interaction with VAPA and VAPB. Acts as a lipid transfer protein that redirects sterol to the endosome at the expense of the cell membrane and favors membrane formation inside endosomes. May also mediate cholesterol transport between other membranes, such as mitochondria membrane or cell membrane. However, such results need additional experimental evidences; probably mainly mediates cholesterol transport from the endoplasmic reticulum to endosomes. Does not activate transcriptional cholesterol sensing. Able to bind other lipids, such as lutein, a xanthophyll carotenoids that form the macular pigment of the retina. The chain is StAR-related lipid transfer protein 3 from Mus musculus (Mouse).